A 138-amino-acid chain; its full sequence is MRILWIVAVCLIGVEGNLFQFAKMINGKLGAFSVWNYISYGCYCGWGGQGTPKDATDRCCFVHDCCYGRVRGCNPKLAIYSYSFKKGNIVCGKNNGCLRDICECDRVAANCFHQNKNTYNKNYRFLSSSRCRQTSEQC.

The N-terminal stretch at 1–16 (MRILWIVAVCLIGVEG) is a signal peptide. Disulfide bonds link cysteine 42/cysteine 131, cysteine 44/cysteine 60, cysteine 59/cysteine 111, cysteine 65/cysteine 138, cysteine 66/cysteine 104, cysteine 73/cysteine 97, and cysteine 91/cysteine 102. Positions 43, 45, and 47 each coordinate Ca(2+). Histidine 63 is a catalytic residue. Ca(2+) is bound at residue aspartate 64. Aspartate 105 is an active-site residue.

The protein belongs to the phospholipase A2 family. Group II subfamily. D49 sub-subfamily. As to quaternary structure, heterodimer of a weakly toxic basic protein having phospholipase A2 activity (B chain (AC Q8JFG1)) and a non-toxic acidic protein functioning as its inhibitor (A chain). Requires Ca(2+) as cofactor. In terms of tissue distribution, expressed by the venom gland.

Its subcellular location is the secreted. It catalyses the reaction a 1,2-diacyl-sn-glycero-3-phosphocholine + H2O = a 1-acyl-sn-glycero-3-phosphocholine + a fatty acid + H(+). Its function is as follows. Heterodimer: postsynaptic neurotoxin. Functionally, monomer: snake venom phospholipase A2 (PLA2) that shows postsynaptic neurotoxicity. PLA2 catalyzes the calcium-dependent hydrolysis of the 2-acyl groups in 3-sn-phosphoglycerides. This Vipera aspis aspis (Aspic viper) protein is Basic phospholipase A2 vaspin B chain.